The sequence spans 279 residues: Ribosomal RNA small subunit methyltransferase J (279 aa).

S-adenosyl-L-methionine contacts are provided by residues 138–139 (ER) and aspartate 194.

The protein belongs to the methyltransferase superfamily. RsmJ family.

The protein resides in the cytoplasm. It catalyses the reaction guanosine(1516) in 16S rRNA + S-adenosyl-L-methionine = N(2)-methylguanosine(1516) in 16S rRNA + S-adenosyl-L-homocysteine + H(+). Functionally, specifically methylates the guanosine in position 1516 of 16S rRNA. The chain is Ribosomal RNA small subunit methyltransferase J from Acinetobacter baumannii (strain ATCC 17978 / DSM 105126 / CIP 53.77 / LMG 1025 / NCDC KC755 / 5377).